The sequence spans 629 residues: tRNA uridine 5-carboxymethylaminomethyl modification enzyme MnmG (629 aa).

FAD contacts are provided by residues 13-18, valine 125, and serine 180; that span reads GGGHAG. 273–287 serves as a coordination point for NAD(+); that stretch reads GPRYCPSIEDKVMRF. Glutamine 370 provides a ligand contact to FAD.

This sequence belongs to the MnmG family. In terms of assembly, homodimer. Heterotetramer of two MnmE and two MnmG subunits. Requires FAD as cofactor.

It is found in the cytoplasm. In terms of biological role, NAD-binding protein involved in the addition of a carboxymethylaminomethyl (cmnm) group at the wobble position (U34) of certain tRNAs, forming tRNA-cmnm(5)s(2)U34. The chain is tRNA uridine 5-carboxymethylaminomethyl modification enzyme MnmG from Salmonella dublin (strain CT_02021853).